The following is an 807-amino-acid chain: Glycerol-3-phosphate acyltransferase (807 aa).

An HXXXXD motif motif is present at residues 306-311 (HRSHMD).

Belongs to the GPAT/DAPAT family.

The protein resides in the cell inner membrane. It catalyses the reaction sn-glycerol 3-phosphate + an acyl-CoA = a 1-acyl-sn-glycero-3-phosphate + CoA. Its pathway is phospholipid metabolism; CDP-diacylglycerol biosynthesis; CDP-diacylglycerol from sn-glycerol 3-phosphate: step 1/3. This Escherichia coli O157:H7 protein is Glycerol-3-phosphate acyltransferase (plsB).